We begin with the raw amino-acid sequence, 516 residues long: NAD(P)H-quinone oxidoreductase chain 4, chloroplastic (516 aa).

14 consecutive transmembrane segments (helical) span residues 4-24 (FPWL…IFLL), 37-57 (LCIC…HFQL), 87-107 (IGPI…AWPV), 111-131 (AQLF…SFSS), 134-154 (LLLF…LLSM), 167-187 (FILY…GIGL), 208-228 (ALEV…LPII), 242-262 (HYST…YGLV), 272-292 (AHCL…IYAA), 305-325 (IAYS…SLSD), 330-350 (GAIL…FLAG), 386-406 (LALP…GIIT), 416-436 (ILIA…SLSM), and 462-482 (LFVS…PDFV).

Belongs to the complex I subunit 4 family.

Its subcellular location is the plastid. It is found in the chloroplast thylakoid membrane. The enzyme catalyses a plastoquinone + NADH + (n+1) H(+)(in) = a plastoquinol + NAD(+) + n H(+)(out). The catalysed reaction is a plastoquinone + NADPH + (n+1) H(+)(in) = a plastoquinol + NADP(+) + n H(+)(out). The chain is NAD(P)H-quinone oxidoreductase chain 4, chloroplastic from Oenothera argillicola (Appalachian evening primrose).